Here is a 306-residue protein sequence, read N- to C-terminus: Homeobox protein HMX3 (306 aa).

The disordered stretch occupies residues 95–181; sequence HTPRTEVPDK…DKKPCRKKKT (87 aa). Basic and acidic residues-rich tracts occupy residues 117 to 143 and 153 to 174; these read GERD…KSPE and EEGK…PDKK. The segment at residues 178–237 is a DNA-binding region (homeobox); sequence KKKTRTVFSRSQVFQLESTFDMKRYLSSSERAGLAASLHLTETQVKIWFQNRRNKWKRQL.

It belongs to the HMX homeobox family.

The protein localises to the nucleus. Functionally, transcription factor involved in specification of neuronal cell types and which is required for inner ear and hypothalamus development. Binds to the 5'-CAAGTG-3' core sequence. May act as a stage-specific inhibitor of anf1 in the anterior neural plate during the development. The protein is Homeobox protein HMX3 (hmx3) of Xenopus laevis (African clawed frog).